Consider the following 329-residue polypeptide: Ketol-acid reductoisomerase (NADP(+)) (329 aa).

The 181-residue stretch at 1–181 (MKVYYEQDAN…GGTRSGVIET (181 aa)) folds into the KARI N-terminal Rossmann domain. NADP(+) is bound by residues 24–27 (YGSQ), Arg47, and 82–85 (DQYQ). The active site involves His107. Gly133 provides a ligand contact to NADP(+). The KARI C-terminal knotted domain occupies 182–327 (TFREETETDL…ARLRSMMPWL (146 aa)). Residues Asp190, Glu194, Glu226, and Glu230 each contribute to the Mg(2+) site. Ser251 contacts substrate.

Belongs to the ketol-acid reductoisomerase family. Mg(2+) serves as cofactor.

The enzyme catalyses (2R)-2,3-dihydroxy-3-methylbutanoate + NADP(+) = (2S)-2-acetolactate + NADPH + H(+). The catalysed reaction is (2R,3R)-2,3-dihydroxy-3-methylpentanoate + NADP(+) = (S)-2-ethyl-2-hydroxy-3-oxobutanoate + NADPH + H(+). The protein operates within amino-acid biosynthesis; L-isoleucine biosynthesis; L-isoleucine from 2-oxobutanoate: step 2/4. It functions in the pathway amino-acid biosynthesis; L-valine biosynthesis; L-valine from pyruvate: step 2/4. Functionally, involved in the biosynthesis of branched-chain amino acids (BCAA). Catalyzes an alkyl-migration followed by a ketol-acid reduction of (S)-2-acetolactate (S2AL) to yield (R)-2,3-dihydroxy-isovalerate. In the isomerase reaction, S2AL is rearranged via a Mg-dependent methyl migration to produce 3-hydroxy-3-methyl-2-ketobutyrate (HMKB). In the reductase reaction, this 2-ketoacid undergoes a metal-dependent reduction by NADPH to yield (R)-2,3-dihydroxy-isovalerate. The chain is Ketol-acid reductoisomerase (NADP(+)) from Oleidesulfovibrio alaskensis (strain ATCC BAA-1058 / DSM 17464 / G20) (Desulfovibrio alaskensis).